The chain runs to 344 residues: Phenylalanine--tRNA ligase alpha subunit (344 aa).

Glu259 contributes to the Mg(2+) binding site.

Belongs to the class-II aminoacyl-tRNA synthetase family. Phe-tRNA synthetase alpha subunit type 1 subfamily. Tetramer of two alpha and two beta subunits. Mg(2+) is required as a cofactor.

The protein localises to the cytoplasm. The enzyme catalyses tRNA(Phe) + L-phenylalanine + ATP = L-phenylalanyl-tRNA(Phe) + AMP + diphosphate + H(+). The protein is Phenylalanine--tRNA ligase alpha subunit of Nitrosospira multiformis (strain ATCC 25196 / NCIMB 11849 / C 71).